We begin with the raw amino-acid sequence, 415 residues long: MAYDEVREVDPEVADALTGERHRQNDTLAMIASENHVSEAVMEAQSSELTNKYAEGYPGSRYYGGCEYADDVEELAVARAKELFGADHVNVQPHSGSSANMGVYFATLAPGDKILSLDLTHGGHLSHGHPANFAGQLYEVEQYEVDAETGRLDYEALREHADAFEPDMIVSGFSAYPREVEWERIQAAADAVGALHMADIAHITGLVAAGEHASPVGVADFVTGSTHKTIRAGRGGIVMCDEAFADDIDSAVFPGAQGGPLMHNIAGKAVGFNEALDPAFEEYAAQVVENAAVLGERLQEHGFSLVSGGTDTHLVLVDLRESHPDISGGDVEGELEDVGIVLNANTVPDETRSAFDPSGIRIGTPALTTRGFDADAMETVADCIARVIDNLGDESVYADVADTVADLCEQYPQYE.

Residues L119 and 123–125 (GHL) contribute to the (6S)-5,6,7,8-tetrahydrofolate site. K228 carries the N6-(pyridoxal phosphate)lysine modification. 353–355 (SAF) lines the (6S)-5,6,7,8-tetrahydrofolate pocket.

This sequence belongs to the SHMT family. In terms of assembly, homodimer. It depends on pyridoxal 5'-phosphate as a cofactor.

The protein localises to the cytoplasm. It carries out the reaction (6R)-5,10-methylene-5,6,7,8-tetrahydrofolate + glycine + H2O = (6S)-5,6,7,8-tetrahydrofolate + L-serine. The protein operates within one-carbon metabolism; tetrahydrofolate interconversion. Its pathway is amino-acid biosynthesis; glycine biosynthesis; glycine from L-serine: step 1/1. Functionally, catalyzes the reversible interconversion of serine and glycine with tetrahydrofolate (THF) serving as the one-carbon carrier. Also exhibits THF-independent aldolase activity toward beta-hydroxyamino acids, producing glycine and aldehydes, via a retro-aldol mechanism. The chain is Serine hydroxymethyltransferase from Halobacterium salinarum (strain ATCC 29341 / DSM 671 / R1).